The following is a 261-amino-acid chain: Fructoselysine 6-kinase (261 aa).

This sequence belongs to the carbohydrate kinase PfkB family. As to quaternary structure, monomer.

The catalysed reaction is N(6)-(D-fructosyl)-L-lysine + ATP = N(6)-(6-phospho-D-fructosyl)-L-lysine + ADP + H(+). The protein operates within carbohydrate metabolism; fructoselysine degradation; D-glucose 6-phosphate and lysine from fructoselysine: step 1/2. Its function is as follows. Catalyzes the ATP-dependent phosphorylation of fructoselysine to fructoselysine 6-phosphate. Functions in a fructoselysine degradation pathway that allows E.coli to grow on fructoselysine or psicoselysine. To a much lesser extenst, is also able to phosphorylate psicoselysine. This chain is Fructoselysine 6-kinase, found in Escherichia coli (strain K12).